A 138-amino-acid polypeptide reads, in one-letter code: MTVKALTQISSAGRNGVGAFVLQCKKLDIHYSDWAGSSRGMNGFIKSLLPKFAAANPQIEFVVSPRPAKHPILMGHYINGRTKAICVRNMEPLEILKKAELLRDASGEKPQKFKKPVTSTNPSVRGVWSPYHGQGMAV.

The protein belongs to the mitochondrion-specific ribosomal protein mL43 family. Component of the mitochondrial large ribosomal subunit (mt-LSU). Mature N.crassa 74S mitochondrial ribosomes consist of a small (37S) and a large (54S) subunit. The 37S small subunit contains a 16S ribosomal RNA (16S mt-rRNA) and 32 different proteins. The 54S large subunit contains a 23S rRNA (23S mt-rRNA) and 42 different proteins.

It localises to the mitochondrion. In terms of biological role, component of the mitochondrial ribosome (mitoribosome), a dedicated translation machinery responsible for the synthesis of mitochondrial genome-encoded proteins, including at least some of the essential transmembrane subunits of the mitochondrial respiratory chain. The mitoribosomes are attached to the mitochondrial inner membrane and translation products are cotranslationally integrated into the membrane. The sequence is that of Large ribosomal subunit protein mL43 (mrpl51) from Neurospora crassa (strain ATCC 24698 / 74-OR23-1A / CBS 708.71 / DSM 1257 / FGSC 987).